The sequence spans 1201 residues: Potassium channel subfamily T member 1 (1201 aa).

Residues 1–28 (MARAKLKNSPSESNSHVKTVPPATTEDV) form a disordered region. Topologically, residues 1-92 (MARAKLKNSP…FFIKNQRSSL (92 aa)) are cytoplasmic. Residues 8–17 (NSPSESNSHV) show a composition bias toward polar residues. Residues 93–115 (RIRLFNFSLKLLTCLLYIVRVLL) traverse the membrane as a helical segment. The Extracellular portion of the chain corresponds to 116–152 (DNPEEGIGCWECEKQNYTLFNQSTKINWSHIFWVDRK). Residues N131 and N136 are each glycosylated (N-linked (GlcNAc...) asparagine). Residues 153–175 (LPLWAVQVSIALISFLETMLLIY) form a helical membrane-spanning segment. Over 176–184 (LSYKGNIWE) the chain is Cytoplasmic. A helical membrane pass occupies residues 185-206 (QIFRISFILEMINTVPFIITIF). Residues 207–216 (WPPLRNLFIP) lie on the Extracellular side of the membrane. The helical transmembrane segment at 217–229 (VFLNCWLAKYALE) threads the bilayer. The Cytoplasmic segment spans residues 230–249 (NMINDLHRAIQRTQSAMFNQ). Residues 250–272 (VLILICTLLCLVFTGTCGIQHLE) traverse the membrane as a helical segment. Residues 273 to 279 (RAGEKLS) are Extracellular-facing. The pore-forming intramembrane region spans 280–300 (LFKSFYFCIVTFSTVGYGDVT). K(+) is bound by residues V294 and G295. At 301–304 (PKIW) the chain is on the extracellular side. A helical membrane pass occupies residues 305 to 326 (PSQLLVVIMICVALVVLPLQFE). The Cytoplasmic segment spans residues 327–1201 (ELVYLWMERQ…NPETRDETQL (875 aa)). Residues 350-486 (EKHVVLCVSS…FHVKFADHVV (137 aa)) enclose the RCK N-terminal 1 domain. L511, H514, S536, and N538 together coordinate Na(+). Residues C750 and C751 each contribute to the Zn(2+) site. Positions 753 and 756 each coordinate K(+). Na(+) contacts are provided by R753 and K756. The Zn(2+) site is built by C758 and H760. 3 residues coordinate K(+): N761, Y769, and G770. Residue F771 participates in Na(+) binding. Residues 773–913 (NKLIIVSAET…QFRAKDSYSL (141 aa)) enclose the RCK N-terminal 2 domain. K(+)-binding residues include S779, L810, D812, G834, and D857. The disordered stretch occupies residues 1175–1201 (NDGHSRKSSCSNKLGPCNPETRDETQL).

It belongs to the potassium channel family. Calcium-activated (TC 1.A.1.3) subfamily. KCa4.1/KCNT1 sub-subfamily. In terms of assembly, homotetramer; which constitutes the Na(+)-activated K(+) channel. Interacts with KCNT2; these heterodimer channels differ from the homomers in their unitary conductance, kinetic behavior, subcellular localization, and response to activation of protein kinase C. Phosphorylated by protein kinase C. Phosphorylation of the C-terminal domain increases channel activity.

The protein localises to the cell membrane. The enzyme catalyses K(+)(in) = K(+)(out). Its activity is regulated as follows. Activated by high intracellular Na(+). In addition to activation by Na(+), is cooperatively activated by intracellular Cl(-) levels. Inhibited by Zn(2+). Activated upon stimulation of G-protein coupled receptors, such as CHRM1 and GRIA1. Sodium-activated K(+) channel. Acts as an important mediator of neuronal membrane excitability. Contributes to the delayed outward currents. Regulates of neuronal bursting in sensory neurons. Contributes to synaptic development and plasticity. This is Potassium channel subfamily T member 1 (KCNT1) from Gallus gallus (Chicken).